Consider the following 86-residue polypeptide: Serine protease inhibitor Kazal-type 4 (86 aa).

The signal sequence occupies residues 1–26 (MAMHLWLVTLTLVPLLGMDRELMVSA). Residues 31 to 86 (FPRMPFCEHMAELPNCPQTPNLICGTDGLTYENECHLCLTRMKTMKDIQIMKDGQC) enclose the Kazal-like domain. 3 disulfides stabilise this stretch: Cys-37–Cys-68, Cys-46–Cys-65, and Cys-54–Cys-86.

As to expression, expressed in the intestinal tract.

It localises to the secreted. The polypeptide is Serine protease inhibitor Kazal-type 4 (Spink4) (Mus musculus (Mouse)).